The primary structure comprises 193 residues: Signal peptidase I T (193 aa).

Residues 1–25 are Cytoplasmic-facing; sequence MTEEKNTNTEKTAKKKTNTYLEWGK. Residues 26-42 traverse the membrane as a helical segment; sequence AIVIAVLLALLIRHFLF. The Extracellular portion of the chain corresponds to 43–193; that stretch reads EPYLVEGSSM…FPFNEMRQTK (151 aa). Active-site residues include Ser-51 and Lys-93.

Belongs to the peptidase S26 family.

It is found in the cell membrane. It carries out the reaction Cleavage of hydrophobic, N-terminal signal or leader sequences from secreted and periplasmic proteins.. This Bacillus subtilis (strain 168) protein is Signal peptidase I T (sipT).